The sequence spans 372 residues: N-methyl-L-tryptophan oxidase (372 aa).

4–34 contacts FAD; it reads DLIIIGSGSVGAAAGYYATRAGLNVLMTDAH. At Cys308 the chain carries S-8alpha-FAD cysteine.

It belongs to the MSOX/MTOX family. MTOX subfamily. In terms of assembly, monomer. FAD is required as a cofactor.

The enzyme catalyses N(alpha)-methyl-L-tryptophan + O2 + H2O = L-tryptophan + formaldehyde + H2O2. In terms of biological role, catalyzes the oxidative demethylation of N-methyl-L-tryptophan. The sequence is that of N-methyl-L-tryptophan oxidase from Escherichia coli O17:K52:H18 (strain UMN026 / ExPEC).